Here is a 295-residue protein sequence, read N- to C-terminus: Alpha-ketoglutarate-dependent sulfate ester dioxygenase (295 aa).

His71 lines the substrate pocket. Fe cation contacts are provided by His98 and Asp100. Val101 contributes to the substrate binding site. Thr125 is a binding site for 2-oxoglutarate. His252 is a Fe cation binding site. Arg263 and Arg267 together coordinate 2-oxoglutarate.

Belongs to the TfdA dioxygenase family. The cofactor is Fe(2+).

The enzyme catalyses a primary linear alkyl sulfate ester + 2-oxoglutarate + O2 = an aldehyde + sulfate + succinate + CO2 + H(+). It catalyses the reaction 2-ethylhexyl sulfate + 2-oxoglutarate + O2 = 2-ethylhexanal + sulfate + succinate + CO2 + H(+). The catalysed reaction is hexyl sulfate + 2-oxoglutarate + O2 = hexanal + sulfate + succinate + CO2 + H(+). It carries out the reaction pentyl sulfate + 2-oxoglutarate + O2 = pentanal + sulfate + succinate + CO2 + H(+). The enzyme catalyses heptyl sulfate + 2-oxoglutarate + O2 = heptanal + sulfate + succinate + CO2 + H(+). Alpha-ketoglutarate-dependent sulfate ester dioxygenase, which oxidizes medium-chain alkyl-sulfate esters. Shows preference for 2-ethylhexyl sulfate (2-EHS) in vitro, leading to the formation of succinate and 2-ethylhexanal. Has likely a role in sulfate scavenging in vivo. Functionally, also causes the inactivation of the 2-carboxyquinoxaline Ty38c (an antitubercular compound that inhibits DprE1) via oxidative decarboxylation, using Ty38c instead of alpha-ketoglutarate as a substrate. Is thus responsible for primary resistance of M.tuberculosis to Ty38c in vitro. Overexpression of Rv3406 causes resistance to Ty38c. The polypeptide is Alpha-ketoglutarate-dependent sulfate ester dioxygenase (Mycobacterium tuberculosis (strain ATCC 25618 / H37Rv)).